Reading from the N-terminus, the 258-residue chain is Imidazole glycerol phosphate synthase subunit HisF (258 aa).

Residues aspartate 11 and aspartate 130 contribute to the active site.

It belongs to the HisA/HisF family. Heterodimer of HisH and HisF.

It localises to the cytoplasm. It catalyses the reaction 5-[(5-phospho-1-deoxy-D-ribulos-1-ylimino)methylamino]-1-(5-phospho-beta-D-ribosyl)imidazole-4-carboxamide + L-glutamine = D-erythro-1-(imidazol-4-yl)glycerol 3-phosphate + 5-amino-1-(5-phospho-beta-D-ribosyl)imidazole-4-carboxamide + L-glutamate + H(+). It participates in amino-acid biosynthesis; L-histidine biosynthesis; L-histidine from 5-phospho-alpha-D-ribose 1-diphosphate: step 5/9. Its function is as follows. IGPS catalyzes the conversion of PRFAR and glutamine to IGP, AICAR and glutamate. The HisF subunit catalyzes the cyclization activity that produces IGP and AICAR from PRFAR using the ammonia provided by the HisH subunit. The polypeptide is Imidazole glycerol phosphate synthase subunit HisF (Roseiflexus sp. (strain RS-1)).